Reading from the N-terminus, the 144-residue chain is 3-dehydroquinate dehydratase (144 aa).

Tyr-22 serves as the catalytic Proton acceptor. Substrate contacts are provided by Asn-71, His-77, and Asp-84. The active-site Proton donor is His-97. Substrate-binding positions include 98–99 (IS) and Arg-108.

The protein belongs to the type-II 3-dehydroquinase family. In terms of assembly, homododecamer.

It catalyses the reaction 3-dehydroquinate = 3-dehydroshikimate + H2O. The protein operates within metabolic intermediate biosynthesis; chorismate biosynthesis; chorismate from D-erythrose 4-phosphate and phosphoenolpyruvate: step 3/7. Catalyzes a trans-dehydration via an enolate intermediate. The protein is 3-dehydroquinate dehydratase (aroQ) of Thermotoga maritima (strain ATCC 43589 / DSM 3109 / JCM 10099 / NBRC 100826 / MSB8).